A 338-amino-acid chain; its full sequence is Holliday junction branch migration complex subunit RuvB (338 aa).

The interval 1 to 181 (MTTRTISPEK…FGVISRLEFY (181 aa)) is large ATPase domain (RuvB-L). ATP contacts are provided by residues Leu20, Arg21, Gly62, Lys65, Thr66, Thr67, 128–130 (EDF), Arg171, Tyr181, and Arg218. Position 66 (Thr66) interacts with Mg(2+). The interval 182–252 (TDAELSTIVT…VVDESLKLLE (71 aa)) is small ATPAse domain (RuvB-S). A head domain (RuvB-H) region spans residues 255-338 (EKGFDQMDRT…APAPGQGALF (84 aa)). The DNA site is built by Arg291, Arg310, and Arg315.

Belongs to the RuvB family. In terms of assembly, homohexamer. Forms an RuvA(8)-RuvB(12)-Holliday junction (HJ) complex. HJ DNA is sandwiched between 2 RuvA tetramers; dsDNA enters through RuvA and exits via RuvB. An RuvB hexamer assembles on each DNA strand where it exits the tetramer. Each RuvB hexamer is contacted by two RuvA subunits (via domain III) on 2 adjacent RuvB subunits; this complex drives branch migration. In the full resolvosome a probable DNA-RuvA(4)-RuvB(12)-RuvC(2) complex forms which resolves the HJ.

The protein resides in the cytoplasm. The catalysed reaction is ATP + H2O = ADP + phosphate + H(+). In terms of biological role, the RuvA-RuvB-RuvC complex processes Holliday junction (HJ) DNA during genetic recombination and DNA repair, while the RuvA-RuvB complex plays an important role in the rescue of blocked DNA replication forks via replication fork reversal (RFR). RuvA specifically binds to HJ cruciform DNA, conferring on it an open structure. The RuvB hexamer acts as an ATP-dependent pump, pulling dsDNA into and through the RuvAB complex. RuvB forms 2 homohexamers on either side of HJ DNA bound by 1 or 2 RuvA tetramers; 4 subunits per hexamer contact DNA at a time. Coordinated motions by a converter formed by DNA-disengaged RuvB subunits stimulates ATP hydrolysis and nucleotide exchange. Immobilization of the converter enables RuvB to convert the ATP-contained energy into a lever motion, pulling 2 nucleotides of DNA out of the RuvA tetramer per ATP hydrolyzed, thus driving DNA branch migration. The RuvB motors rotate together with the DNA substrate, which together with the progressing nucleotide cycle form the mechanistic basis for DNA recombination by continuous HJ branch migration. Branch migration allows RuvC to scan DNA until it finds its consensus sequence, where it cleaves and resolves cruciform DNA. The polypeptide is Holliday junction branch migration complex subunit RuvB (Geobacter sulfurreducens (strain ATCC 51573 / DSM 12127 / PCA)).